The sequence spans 180 residues: Putative 5'(3')-deoxyribonucleotidase (180 aa).

Aspartate 9 serves as the catalytic Nucleophile. The Mg(2+) site is built by aspartate 9, aspartate 11, and aspartate 135. The active-site Proton donor is aspartate 11.

The protein belongs to the 5'(3')-deoxyribonucleotidase family. The cofactor is Mg(2+).

Dephosphorylates the 5' and 2'(3')-phosphates of deoxyribonucleotides. This Staphylococcus aureus (strain MSSA476) protein is Putative 5'(3')-deoxyribonucleotidase.